The following is a 663-amino-acid chain: DNA topoisomerase 4 subunit B (663 aa).

Residues Tyr7, Asn47, Asp74, 114 to 120 (GLHGVGA), and Lys341 contribute to the ATP site. The segment at 386–416 (REAARKAREDARSGKKNKRKDTLLSGKLTPA) is disordered. Basic and acidic residues predominate over residues 387–398 (EAARKAREDARS). One can recognise a Toprim domain in the interval 424 to 538 (NELYLVEGDS…ADRVFIALPP (115 aa)). Mg(2+)-binding residues include Glu430, Asp503, and Asp505.

The protein belongs to the type II topoisomerase family. ParE type 2 subfamily. In terms of assembly, heterotetramer composed of ParC and ParE. Mg(2+) is required as a cofactor. Requires Mn(2+) as cofactor. Ca(2+) serves as cofactor.

The enzyme catalyses ATP-dependent breakage, passage and rejoining of double-stranded DNA.. In terms of biological role, topoisomerase IV is essential for chromosome segregation. It relaxes supercoiled DNA. Performs the decatenation events required during the replication of a circular DNA molecule. This is DNA topoisomerase 4 subunit B from Staphylococcus aureus (strain MSSA476).